We begin with the raw amino-acid sequence, 31 residues long: Cytochrome b6-f complex subunit 6 (31 aa).

A helical transmembrane segment spans residues 4–24 (IISYFGLLLATLTFTIVLFVG).

It belongs to the PetL family. The 4 large subunits of the cytochrome b6-f complex are cytochrome b6, subunit IV (17 kDa polypeptide, PetD), cytochrome f and the Rieske protein, while the 4 small subunits are PetG, PetL, PetM and PetN. The complex functions as a dimer.

It is found in the plastid. It localises to the chloroplast thylakoid membrane. In terms of biological role, component of the cytochrome b6-f complex, which mediates electron transfer between photosystem II (PSII) and photosystem I (PSI), cyclic electron flow around PSI, and state transitions. PetL is important for photoautotrophic growth as well as for electron transfer efficiency and stability of the cytochrome b6-f complex. The chain is Cytochrome b6-f complex subunit 6 from Staurastrum punctulatum (Green alga).